A 257-amino-acid chain; its full sequence is Phosphate import ATP-binding protein PstB (257 aa).

The region spanning Ile-11–Ile-252 is the ABC transporter domain. Gly-43–Ser-50 is an ATP binding site.

It belongs to the ABC transporter superfamily. Phosphate importer (TC 3.A.1.7) family. In terms of assembly, the complex is composed of two ATP-binding proteins (PstB), two transmembrane proteins (PstC and PstA) and a solute-binding protein (PstS).

The protein resides in the cell inner membrane. The enzyme catalyses phosphate(out) + ATP + H2O = ADP + 2 phosphate(in) + H(+). Functionally, part of the ABC transporter complex PstSACB involved in phosphate import. Responsible for energy coupling to the transport system. The sequence is that of Phosphate import ATP-binding protein PstB from Salmonella paratyphi A (strain ATCC 9150 / SARB42).